A 557-amino-acid chain; its full sequence is Dihydroxy-acid dehydratase (557 aa).

D78 contributes to the Mg(2+) binding site. C119 serves as a coordination point for [2Fe-2S] cluster. Mg(2+) contacts are provided by D120 and K121. The residue at position 121 (K121) is an N6-carboxylysine. C192 provides a ligand contact to [2Fe-2S] cluster. Mg(2+) is bound at residue E442. The active-site Proton acceptor is the S468.

This sequence belongs to the IlvD/Edd family. As to quaternary structure, homodimer. [2Fe-2S] cluster is required as a cofactor. Requires Mg(2+) as cofactor.

It carries out the reaction (2R)-2,3-dihydroxy-3-methylbutanoate = 3-methyl-2-oxobutanoate + H2O. The enzyme catalyses (2R,3R)-2,3-dihydroxy-3-methylpentanoate = (S)-3-methyl-2-oxopentanoate + H2O. Its pathway is amino-acid biosynthesis; L-isoleucine biosynthesis; L-isoleucine from 2-oxobutanoate: step 3/4. It participates in amino-acid biosynthesis; L-valine biosynthesis; L-valine from pyruvate: step 3/4. Functionally, functions in the biosynthesis of branched-chain amino acids. Catalyzes the dehydration of (2R,3R)-2,3-dihydroxy-3-methylpentanoate (2,3-dihydroxy-3-methylvalerate) into 2-oxo-3-methylpentanoate (2-oxo-3-methylvalerate) and of (2R)-2,3-dihydroxy-3-methylbutanoate (2,3-dihydroxyisovalerate) into 2-oxo-3-methylbutanoate (2-oxoisovalerate), the penultimate precursor to L-isoleucine and L-valine, respectively. This chain is Dihydroxy-acid dehydratase, found in Bacillus cereus (strain Q1).